The following is a 138-amino-acid chain: Putative pre-16S rRNA nuclease (138 aa).

It belongs to the YqgF nuclease family.

It localises to the cytoplasm. Functionally, could be a nuclease involved in processing of the 5'-end of pre-16S rRNA. The sequence is that of Putative pre-16S rRNA nuclease from Citrobacter koseri (strain ATCC BAA-895 / CDC 4225-83 / SGSC4696).